Consider the following 367-residue polypeptide: DNA replication and repair protein RecF (367 aa).

Residue 30 to 37 coordinates ATP; that stretch reads GANGSGKT.

The protein belongs to the RecF family.

It localises to the cytoplasm. In terms of biological role, the RecF protein is involved in DNA metabolism; it is required for DNA replication and normal SOS inducibility. RecF binds preferentially to single-stranded, linear DNA. It also seems to bind ATP. The sequence is that of DNA replication and repair protein RecF from Pseudomonas syringae pv. tomato (strain ATCC BAA-871 / DC3000).